Here is a 270-residue protein sequence, read N- to C-terminus: Ribosomal RNA small subunit methyltransferase A (270 aa).

S-adenosyl-L-methionine contacts are provided by asparagine 18, leucine 20, glycine 45, glutamate 66, aspartate 91, and asparagine 112.

The protein belongs to the class I-like SAM-binding methyltransferase superfamily. rRNA adenine N(6)-methyltransferase family. RsmA subfamily.

It is found in the cytoplasm. It catalyses the reaction adenosine(1518)/adenosine(1519) in 16S rRNA + 4 S-adenosyl-L-methionine = N(6)-dimethyladenosine(1518)/N(6)-dimethyladenosine(1519) in 16S rRNA + 4 S-adenosyl-L-homocysteine + 4 H(+). Specifically dimethylates two adjacent adenosines (A1518 and A1519) in the loop of a conserved hairpin near the 3'-end of 16S rRNA in the 30S particle. May play a critical role in biogenesis of 30S subunits. The sequence is that of Ribosomal RNA small subunit methyltransferase A from Psychromonas ingrahamii (strain DSM 17664 / CCUG 51855 / 37).